A 249-amino-acid polypeptide reads, in one-letter code: 2,5-diamino-6-ribosylamino-4(3H)-pyrimidinone 5'-phosphate reductase (249 aa).

Residues threonine 79, aspartate 83, methionine 164, and glycine 187–isoleucine 191 each bind NADP(+).

This sequence belongs to the HTP reductase family. In terms of assembly, homodimer.

The enzyme catalyses 2,5-diamino-6-(1-D-ribitylamino)pyrimidin-4(3H)-one 5'-phosphate + NADP(+) = 2,5-diamino-6-(1-D-ribosylamino)pyrimidin-4(3H)-one 5'-phosphate + NADPH + H(+). The catalysed reaction is 2,5-diamino-6-(1-D-ribitylamino)pyrimidin-4(3H)-one 5'-phosphate + NAD(+) = 2,5-diamino-6-(1-D-ribosylamino)pyrimidin-4(3H)-one 5'-phosphate + NADH + H(+). It functions in the pathway cofactor biosynthesis; riboflavin biosynthesis. Functionally, catalyzes an early step in riboflavin biosynthesis, the NADPH-dependent reduction of the ribose side chain of 2,5-diamino-6-ribosylamino-4(3H)-pyrimidinone 5'-phosphate, yielding 2,5-diamino-6-ribitylamino-4(3H)-pyrimidinone 5'-phosphate. The protein is 2,5-diamino-6-ribosylamino-4(3H)-pyrimidinone 5'-phosphate reductase (RIB7) of Kluyveromyces marxianus (Yeast).